A 161-amino-acid chain; its full sequence is Transcription initiation factor TFIID subunit 12 (161 aa).

The interval 15–55 (FSSIKPEPASTPPQGSMANSTAVVKIPGTPGAGGRLSPENN) is disordered. Residue Lys19 forms a Glycyl lysine isopeptide (Lys-Gly) (interchain with G-Cter in SUMO2) linkage. Over residues 26 to 36 (PPQGSMANSTA) the composition is skewed to polar residues. The residue at position 43 (Thr43) is a Phosphothreonine. At Ser51 the chain carries Phosphoserine. Phosphothreonine is present on Thr59. One can recognise a Histone-fold domain in the interval 59–126 (TKKKLQDLVR…QLHLERQWNM (68 aa)).

It belongs to the TAF12 family. As to quaternary structure, component of the TFIID basal transcription factor complex, composed of TATA-box-binding protein TBP, and a number of TBP-associated factors (TAFs), including TAF1, TAF2, TAF3, TAF4, TAF5, TAF6, TAF7, TAF8, TAF9, TAF10, TAF11, TAF12 and TAF13. Component of the TATA-binding protein-free TAF complex (TFTC), the PCAF histone acetylase complex and the STAGA transcription coactivator-HAT complex. Component of the PCAF complex, at least composed of TADA2L/ADA2, TADA3L/ADA3, TAF5L/PAF65-beta, SUPT3H, TAF6L, TAF9, TAF10, TAF12 and TRRAP. Component of the STAGA transcription coactivator-HAT complex, at least composed of SUPT3H, GCN5L2, TAF5L, TAF6L, STAF65-gamma/SUPT7L, TADA3L, TAD1L, TAF10, TAF12, TRRAP and TAF9. Interacts with ATF7 (via the transactivation domain); the interaction is prevented by sumoylation of ATF7. Interacts with TBP; the interaction is direct. Interacts with TAF10; the interaction is direct. Interacts with ATF7, promoting transactivation by ATF7. In terms of assembly, does not promote the transactivation of ATF7. In terms of tissue distribution, ubiquitous.

The protein localises to the nucleus. In terms of biological role, the TFIID basal transcription factor complex plays a major role in the initiation of RNA polymerase II (Pol II)-dependent transcription. TFIID recognizes and binds promoters with or without a TATA box via its subunit TBP, a TATA-box-binding protein, and promotes assembly of the pre-initiation complex (PIC). The TFIID complex consists of TBP and TBP-associated factors (TAFs), including TAF1, TAF2, TAF3, TAF4, TAF5, TAF6, TAF7, TAF8, TAF9, TAF10, TAF11, TAF12 and TAF13. Component of the TATA-binding protein-free TAF complex (TFTC), the PCAF histone acetylase complex and the STAGA transcription coactivator-HAT complex. This Homo sapiens (Human) protein is Transcription initiation factor TFIID subunit 12.